We begin with the raw amino-acid sequence, 398 residues long: Succinate--CoA ligase [ADP-forming] subunit beta (398 aa).

The ATP-grasp domain occupies 9-254 (KAVLREFGVP…ESEEDAKEIE (246 aa)). Residues K46, 53–55 (GRG), E109, S112, and E117 each bind ATP. Residues N209 and D223 each contribute to the Mg(2+) site. Residues N274 and 331-333 (GIM) each bind substrate.

Belongs to the succinate/malate CoA ligase beta subunit family. In terms of assembly, heterotetramer of two alpha and two beta subunits. Requires Mg(2+) as cofactor.

The enzyme catalyses succinate + ATP + CoA = succinyl-CoA + ADP + phosphate. The catalysed reaction is GTP + succinate + CoA = succinyl-CoA + GDP + phosphate. It participates in carbohydrate metabolism; tricarboxylic acid cycle; succinate from succinyl-CoA (ligase route): step 1/1. Succinyl-CoA synthetase functions in the citric acid cycle (TCA), coupling the hydrolysis of succinyl-CoA to the synthesis of either ATP or GTP and thus represents the only step of substrate-level phosphorylation in the TCA. The beta subunit provides nucleotide specificity of the enzyme and binds the substrate succinate, while the binding sites for coenzyme A and phosphate are found in the alpha subunit. The polypeptide is Succinate--CoA ligase [ADP-forming] subunit beta (Rhodopseudomonas palustris (strain HaA2)).